The sequence spans 216 residues: MTTPVSFHPQAFIELALSRGVLKFGEFTLKSGRVSPYFFNAGLLNDGEALSLLAQGYADKLTQCENVDVIFGPAYKGIPFVAATAVALSQTHNKSVPWGFNRKEAKDHGEGGILVGAAVEGKKVWIIDDVITAGTAIREVVTILKNAGATIAGVLVALDRQERGQGELSAIQEVQKELEIPVHALITMKDLMDYLEAKGEKEALANMQAYREKYGI.

Residue Lys30 coordinates 5-phospho-alpha-D-ribose 1-diphosphate. 38-39 (FF) lines the orotate pocket. Residues 75-76 (YK), Arg102, Lys103, Lys106, His108, and 128-136 (DDVITAGTA) each bind 5-phospho-alpha-D-ribose 1-diphosphate. Orotate contacts are provided by Thr132 and Arg160.

This sequence belongs to the purine/pyrimidine phosphoribosyltransferase family. PyrE subfamily. Homodimer. Requires Mg(2+) as cofactor.

The catalysed reaction is orotidine 5'-phosphate + diphosphate = orotate + 5-phospho-alpha-D-ribose 1-diphosphate. It functions in the pathway pyrimidine metabolism; UMP biosynthesis via de novo pathway; UMP from orotate: step 1/2. Functionally, catalyzes the transfer of a ribosyl phosphate group from 5-phosphoribose 1-diphosphate to orotate, leading to the formation of orotidine monophosphate (OMP). This Acinetobacter baumannii (strain AB307-0294) protein is Orotate phosphoribosyltransferase.